The sequence spans 619 residues: Chaperone protein DnaK (619 aa).

Phosphothreonine; by autocatalysis is present on Thr-175. The tract at residues 578–619 (NGGAQGEGFDPNNMGGANAGTGAANSNDDNVVDADFEVQDDK) is disordered. A compositionally biased stretch (low complexity) spans 589–606 (NNMGGANAGTGAANSNDD). The segment covering 607 to 619 (NVVDADFEVQDDK) has biased composition (acidic residues).

This sequence belongs to the heat shock protein 70 family.

Its function is as follows. Acts as a chaperone. The chain is Chaperone protein DnaK from Clostridium perfringens (strain SM101 / Type A).